A 144-amino-acid chain; its full sequence is MRLNTLSPAAGAKSAAKRVGRGIGSGTGKTCGRGHKGQKSRSGGGVRVGFEGGQMPLKIRLPKFGFTSRKALVSAEIRISELAKVNGDVIDLNALKDANLVTRNIQFAKIVLSGTIERPVTVKGLKVTQGARAAIEAAGGKIEE.

Residues Met1–Gly49 are disordered. Residues Arg21 to Cys31 show a composition bias toward gly residues.

The protein belongs to the universal ribosomal protein uL15 family. Part of the 50S ribosomal subunit.

In terms of biological role, binds to the 23S rRNA. The sequence is that of Large ribosomal subunit protein uL15 from Shewanella halifaxensis (strain HAW-EB4).